A 255-amino-acid chain; its full sequence is Cytochrome c oxidase subunit 3 (255 aa).

7 helical membrane passes run 12–29 (INII…STGL), 57–77 (LKYL…INGI), 91–111 (IFGM…WGFF), 126–146 (LEAF…ISLI), 155–175 (YFEV…FLSF), 196–216 (FNVL…FALM), and 235–255 (GMYW…LFLL).

It belongs to the cytochrome c oxidase subunit 3 family. Component of the cytochrome c oxidase (complex IV, CIV), a multisubunit enzyme composed of a catalytic core of 3 subunits and several supernumerary subunits. The complex exists as a monomer or a dimer and forms supercomplexes (SCs) in the inner mitochondrial membrane with ubiquinol-cytochrome c oxidoreductase (cytochrome b-c1 complex, complex III, CIII).

The protein localises to the mitochondrion inner membrane. The catalysed reaction is 4 Fe(II)-[cytochrome c] + O2 + 8 H(+)(in) = 4 Fe(III)-[cytochrome c] + 2 H2O + 4 H(+)(out). In terms of biological role, component of the cytochrome c oxidase, the last enzyme in the mitochondrial electron transport chain which drives oxidative phosphorylation. The respiratory chain contains 3 multisubunit complexes succinate dehydrogenase (complex II, CII), ubiquinol-cytochrome c oxidoreductase (cytochrome b-c1 complex, complex III, CIII) and cytochrome c oxidase (complex IV, CIV), that cooperate to transfer electrons derived from NADH and succinate to molecular oxygen, creating an electrochemical gradient over the inner membrane that drives transmembrane transport and the ATP synthase. Cytochrome c oxidase is the component of the respiratory chain that catalyzes the reduction of oxygen to water. Electrons originating from reduced cytochrome c in the intermembrane space (IMS) are transferred via the dinuclear copper A center (CU(A)) of subunit 2 and heme A of subunit 1 to the active site in subunit 1, a binuclear center (BNC) formed by heme A3 and copper B (CU(B)). The BNC reduces molecular oxygen to 2 water molecules using 4 electrons from cytochrome c in the IMS and 4 protons from the mitochondrial matrix. The protein is Cytochrome c oxidase subunit 3 (MT-CO3) of Theileria annulata.